The chain runs to 275 residues: 2,3,4,5-tetrahydropyridine-2,6-dicarboxylate N-succinyltransferase (275 aa).

Substrate is bound by residues Arg-104 and Asp-141.

This sequence belongs to the transferase hexapeptide repeat family. In terms of assembly, homotrimer.

It is found in the cytoplasm. The catalysed reaction is (S)-2,3,4,5-tetrahydrodipicolinate + succinyl-CoA + H2O = (S)-2-succinylamino-6-oxoheptanedioate + CoA. It functions in the pathway amino-acid biosynthesis; L-lysine biosynthesis via DAP pathway; LL-2,6-diaminopimelate from (S)-tetrahydrodipicolinate (succinylase route): step 1/3. The protein is 2,3,4,5-tetrahydropyridine-2,6-dicarboxylate N-succinyltransferase of Aeromonas hydrophila subsp. hydrophila (strain ATCC 7966 / DSM 30187 / BCRC 13018 / CCUG 14551 / JCM 1027 / KCTC 2358 / NCIMB 9240 / NCTC 8049).